The sequence spans 264 residues: MRAYLDLMQKILDEGTVKSDRTGTGTISLFGHQMRFNLAEGFPLVTTKKCHLRSIIHELLWFLNGDTNTAYLKEHGVSIWDEWADENGDLGPVYGAQWRSWPAADGSVIDQIQKAVDDIKHNPDSRRIIVSAWNVGELDKMALAPCHAFFQFYVADGKLSCQLYQRSCDVFLGLPFNIASYALLTHMMAQQCDLEVGDFVWTGGDVHLYSNHMEQTALQLTREPRPLPTLVIKRKPDSIFDYKFEDFEIEGYDPHPGIKAPVAI.

Arginine 21 is a binding site for dUMP. Residue histidine 51 coordinates (6R)-5,10-methylene-5,6,7,8-tetrahydrofolate. 126–127 (RR) is a dUMP binding site. The Nucleophile role is filled by cysteine 146. Residues 166-169 (RSCD), asparagine 177, and 207-209 (HLY) contribute to the dUMP site. Aspartate 169 lines the (6R)-5,10-methylene-5,6,7,8-tetrahydrofolate pocket. Alanine 263 is a binding site for (6R)-5,10-methylene-5,6,7,8-tetrahydrofolate.

This sequence belongs to the thymidylate synthase family. Bacterial-type ThyA subfamily. Homodimer.

It localises to the cytoplasm. It catalyses the reaction dUMP + (6R)-5,10-methylene-5,6,7,8-tetrahydrofolate = 7,8-dihydrofolate + dTMP. It functions in the pathway pyrimidine metabolism; dTTP biosynthesis. Catalyzes the reductive methylation of 2'-deoxyuridine-5'-monophosphate (dUMP) to 2'-deoxythymidine-5'-monophosphate (dTMP) while utilizing 5,10-methylenetetrahydrofolate (mTHF) as the methyl donor and reductant in the reaction, yielding dihydrofolate (DHF) as a by-product. This enzymatic reaction provides an intracellular de novo source of dTMP, an essential precursor for DNA biosynthesis. The chain is Thymidylate synthase from Aeromonas hydrophila subsp. hydrophila (strain ATCC 7966 / DSM 30187 / BCRC 13018 / CCUG 14551 / JCM 1027 / KCTC 2358 / NCIMB 9240 / NCTC 8049).